Here is a 407-residue protein sequence, read N- to C-terminus: Ribonuclease Z (407 aa).

Residues 1–308 form a ribonuclease Z region; the sequence is MEITFLGTSS…QDFLHYAIPR (308 aa). Residues histidine 62, histidine 64, aspartate 66, histidine 67, histidine 139, aspartate 210, and histidine 268 each coordinate Zn(2+). Residue aspartate 66 is the Proton acceptor of the active site. The segment at 309–407 is unknown; it reads DGQICAEMPP…VDWSALNVLF (99 aa).

This sequence belongs to the RNase Z family. In terms of assembly, homodimer. It depends on Zn(2+) as a cofactor.

It carries out the reaction Endonucleolytic cleavage of RNA, removing extra 3' nucleotides from tRNA precursor, generating 3' termini of tRNAs. A 3'-hydroxy group is left at the tRNA terminus and a 5'-phosphoryl group is left at the trailer molecule.. In terms of biological role, zinc phosphodiesterase, which displays some tRNA 3'-processing endonuclease activity. Probably involved in tRNA maturation, by removing a 3'-trailer from precursor tRNA. In Thermosynechococcus vestitus (strain NIES-2133 / IAM M-273 / BP-1), this protein is Ribonuclease Z (rnz).